Here is a 497-residue protein sequence, read N- to C-terminus: Serine/arginine-rich protein PSR (497 aa).

The signal sequence occupies residues 1 to 19; it reads MYSRCIALVFVGLLASSLA. The Extracellular segment spans residues 20–366; it reads ANCYGPAGKL…HHGLSSQKLG (347 aa). N-linked (GlcNAc...) asparagine glycosylation is found at asparagine 92, asparagine 193, asparagine 202, asparagine 261, and asparagine 283. Residues 367 to 387 form a helical membrane-spanning segment; it reads LAIGLPIAGVFLIILIAAAII. Over 388-497 the chain is Cytoplasmic; that stretch reads YYRKRRESEK…ESASRDSDSD (110 aa). Residues 424–450 are necessary for phosphorylation by PSRPK in vitro; it reads MGSKTMQAMLDMRDDDESEHDSDDGYG. Positions 436–447 are enriched in acidic residues; sequence RDDDESEHDSDD. The interval 436-497 is disordered; the sequence is RDDDESEHDS…ESASRDSDSD (62 aa). Residues 459–471 show a composition bias toward basic residues; that stretch reads GRSRSRSRSRSVS. A compositionally biased stretch (basic and acidic residues) spans 476–497; sequence GSRDARSESDPGESASRDSDSD.

In terms of processing, phosphorylated on serine residues in the RS domain by PSRPK.

Its subcellular location is the membrane. This Physarum polycephalum (Slime mold) protein is Serine/arginine-rich protein PSR.